Consider the following 559-residue polypeptide: Dihydroxy-acid dehydratase (559 aa).

D78 lines the Mg(2+) pocket. Residue C119 coordinates [2Fe-2S] cluster. D120 and K121 together coordinate Mg(2+). Position 121 is an N6-carboxylysine (K121). A [2Fe-2S] cluster-binding site is contributed by C191. E442 contacts Mg(2+). The active-site Proton acceptor is S468.

The protein belongs to the IlvD/Edd family. Homodimer. Requires [2Fe-2S] cluster as cofactor. Mg(2+) is required as a cofactor.

It catalyses the reaction (2R)-2,3-dihydroxy-3-methylbutanoate = 3-methyl-2-oxobutanoate + H2O. The catalysed reaction is (2R,3R)-2,3-dihydroxy-3-methylpentanoate = (S)-3-methyl-2-oxopentanoate + H2O. The protein operates within amino-acid biosynthesis; L-isoleucine biosynthesis; L-isoleucine from 2-oxobutanoate: step 3/4. It functions in the pathway amino-acid biosynthesis; L-valine biosynthesis; L-valine from pyruvate: step 3/4. Functionally, functions in the biosynthesis of branched-chain amino acids. Catalyzes the dehydration of (2R,3R)-2,3-dihydroxy-3-methylpentanoate (2,3-dihydroxy-3-methylvalerate) into 2-oxo-3-methylpentanoate (2-oxo-3-methylvalerate) and of (2R)-2,3-dihydroxy-3-methylbutanoate (2,3-dihydroxyisovalerate) into 2-oxo-3-methylbutanoate (2-oxoisovalerate), the penultimate precursor to L-isoleucine and L-valine, respectively. The chain is Dihydroxy-acid dehydratase from Agathobacter rectalis (strain ATCC 33656 / DSM 3377 / JCM 17463 / KCTC 5835 / VPI 0990) (Eubacterium rectale).